A 343-amino-acid polypeptide reads, in one-letter code: 4-hydroxy-2-oxovalerate aldolase 2 (343 aa).

One can recognise a Pyruvate carboxyltransferase domain in the interval 5-255 (ITIVDTTLRD…DTGVDLFPLI (251 aa)). Residues 13–14 (RD), Ser167, and His194 each bind substrate. Residue Asp14 coordinates Mn(2+). Mn(2+) is bound by residues His194 and His196. Tyr285 lines the substrate pocket.

The protein belongs to the 4-hydroxy-2-oxovalerate aldolase family.

The catalysed reaction is (S)-4-hydroxy-2-oxopentanoate = acetaldehyde + pyruvate. The protein is 4-hydroxy-2-oxovalerate aldolase 2 of Rhodococcus jostii (strain RHA1).